Here is a 255-residue protein sequence, read N- to C-terminus: Urease accessory protein UreD 1 (255 aa).

Belongs to the UreD family. UreD, UreF and UreG form a complex that acts as a GTP-hydrolysis-dependent molecular chaperone, activating the urease apoprotein by helping to assemble the nickel containing metallocenter of UreC. The UreE protein probably delivers the nickel.

The protein localises to the cytoplasm. In terms of biological role, required for maturation of urease via the functional incorporation of the urease nickel metallocenter. The polypeptide is Urease accessory protein UreD 1 (Streptomyces griseus subsp. griseus (strain JCM 4626 / CBS 651.72 / NBRC 13350 / KCC S-0626 / ISP 5235)).